The primary structure comprises 150 residues: Photosystem I reaction center subunit XI (150 aa).

Residues 1–72 (MSDFIQSYNN…DKLGPLRNTD (72 aa)) lie on the Stromal side of the membrane. A helical membrane pass occupies residues 73–93 (VALLSGFLSAVGLIIILTVCL). The Lumenal segment spans residues 94-118 (SMYGNVSFDKDDAKDLLQTTEGWGQ). Residues 119 to 139 (FTAGFLVGAVGGSGFAYLLLA) form a helical membrane-spanning segment. Over 140–150 (NIPVLQNLGLS) the chain is Stromal.

Belongs to the PsaL family.

The protein localises to the plastid. It localises to the chloroplast thylakoid membrane. This chain is Photosystem I reaction center subunit XI, found in Gracilaria tenuistipitata var. liui (Red alga).